Reading from the N-terminus, the 280-residue chain is Formyltetrahydrofolate deformylase (280 aa).

Residues 8 to 86 (VLRTICPDQK…RELNPAGRRR (79 aa)) enclose the ACT domain. Residue Asp225 is part of the active site.

The protein belongs to the PurU family. Homohexamer.

It catalyses the reaction (6R)-10-formyltetrahydrofolate + H2O = (6S)-5,6,7,8-tetrahydrofolate + formate + H(+). The protein operates within purine metabolism; IMP biosynthesis via de novo pathway; formate from 10-formyl-5,6,7,8-tetrahydrofolate: step 1/1. Its activity is regulated as follows. Activated by methionine, inhibited by glycine. In terms of biological role, catalyzes the hydrolysis of 10-formyltetrahydrofolate (formyl-FH4) to formate and tetrahydrofolate (FH4). Provides the major source of formate for the PurT-dependent synthesis of 5'-phosphoribosyl-N-formylglycinamide (FGAR) during aerobic growth. Has a role in regulating the one-carbon pool. The sequence is that of Formyltetrahydrofolate deformylase from Escherichia coli (strain K12).